We begin with the raw amino-acid sequence, 395 residues long: Chaperone protein DnaJ (395 aa).

A J domain is found at 4 to 69 (DYYEVLGLSR…DKRRRYDQFG (66 aa)). Residues 151–232 (GVEKTLKIKK…CYGEGIKQGE (82 aa)) form a CR-type zinc finger. Residues Cys-164, Cys-167, Cys-180, Cys-183, Cys-206, Cys-209, Cys-220, and Cys-223 each coordinate Zn(2+). 4 CXXCXGXG motif repeats span residues 164–171 (CTECNGTG), 180–187 (CPTCHGSG), 206–213 (CPTCGGEG), and 220–227 (CVSCYGEG).

It belongs to the DnaJ family. In terms of assembly, homodimer. Requires Zn(2+) as cofactor.

The protein localises to the cytoplasm. Its function is as follows. Participates actively in the response to hyperosmotic and heat shock by preventing the aggregation of stress-denatured proteins and by disaggregating proteins, also in an autonomous, DnaK-independent fashion. Unfolded proteins bind initially to DnaJ; upon interaction with the DnaJ-bound protein, DnaK hydrolyzes its bound ATP, resulting in the formation of a stable complex. GrpE releases ADP from DnaK; ATP binding to DnaK triggers the release of the substrate protein, thus completing the reaction cycle. Several rounds of ATP-dependent interactions between DnaJ, DnaK and GrpE are required for fully efficient folding. Also involved, together with DnaK and GrpE, in the DNA replication of plasmids through activation of initiation proteins. This Chlorobium phaeobacteroides (strain DSM 266 / SMG 266 / 2430) protein is Chaperone protein DnaJ.